Consider the following 951-residue polypeptide: Leucine-rich repeat-containing G-protein coupled receptor 4 (951 aa).

Residues 1–19 (MPGPLGLLCFLALGLRGSA) form the signal peptide. The Extracellular segment spans residues 20-544 (EPSGAAPPLC…LLGSWMIRLT (525 aa)). Residues 25-57 (APPLCAAPCSCDGDRRVDCSGKGLTAVPEGLSA) form the LRRNT domain. Intrachain disulfides connect cysteine 29-cysteine 35 and cysteine 33-cysteine 43. LRR repeat units follow at residues 35 to 58 (CDGD…LSAF), 59 to 79 (TQLL…AFKN), 81 to 103 (PFLE…ALSG), 104 to 127 (LKEL…AIRG), 128 to 151 (LSSL…SFEG), 153 to 175 (TQLR…PLSN), 176 to 199 (LPTL…AFTN), 201 to 223 (SSLV…CFDG), 224 to 247 (LDNL…IKAL), 248 to 270 (PSLK…AFDG), and 272 to 294 (PLLK…AFHN). Residue asparagine 68 is glycosylated (N-linked (GlcNAc...) asparagine). The N-linked (GlcNAc...) asparagine glycan is linked to asparagine 199. N-linked (GlcNAc...) asparagine glycosylation is found at asparagine 294 and asparagine 314. LRR repeat units follow at residues 318–341 (TVRL…LCQE), 342–363 (QKRL…SFNG), 364–387 (CHAL…TFQG), 388–411 (LTSL…AFAK), and 413–435 (GSIT…GLNG). An intrachain disulfide couples cysteine 339 to cysteine 364. Intrachain disulfides connect cysteine 470-cysteine 522 and cysteine 471-cysteine 476. Residues 545 to 565 (VWFIFLVALFFNLLVILTTFA) form a helical membrane-spanning segment. Residues 566–575 (SCTSVPSSKL) are Cytoplasmic-facing. The helical transmembrane segment at 576-596 (FIGLISVSNLFMGAYTGILTF) threads the bilayer. The Extracellular segment spans residues 597–619 (LDAVSWGRFAEFGIWWEIGSGCK). The cysteines at positions 618 and 693 are disulfide-linked. A helical transmembrane segment spans residues 620-640 (IAGFLAVFSSESAIFLLMLAA). Residues 641–661 (VERSLSAKDMMKNGKSNHLRQ) are Cytoplasmic-facing. A helical transmembrane segment spans residues 662-682 (FRIAALLAFLGAAVAGSFPLF). Residues 683–703 (HRGEYSASPLCLPFPTGETPS) lie on the Extracellular side of the membrane. A helical transmembrane segment spans residues 704–724 (LGFTVTLVLLNSLAFLLMAII). The Cytoplasmic segment spans residues 725 to 756 (YTKLYCNLEKEDLSESSQSSMIKHVAWLIFTN). A helical transmembrane segment spans residues 757–777 (CIFFCPVAFFSFAPLITAVSI). The Extracellular portion of the chain corresponds to 778 to 783 (SPEIMK). The helical transmembrane segment at 784–804 (SVTLIFFPLPACLNPVLYVFF) threads the bilayer. Topologically, residues 805–951 (NPKFKEDWKL…YAYNLPRVKD (147 aa)) are cytoplasmic. Residue serine 920 is modified to Phosphoserine.

This sequence belongs to the G-protein coupled receptor 1 family.

It is found in the cell membrane. Receptor for R-spondins that potentiates the canonical Wnt signaling pathway and is involved in the formation of various organs. Upon binding to R-spondins (RSPO1, RSPO2, RSPO3 or RSPO4), associates with phosphorylated LRP6 and frizzled receptors that are activated by extracellular Wnt receptors, triggering the canonical Wnt signaling pathway to increase expression of target genes. In contrast to classical G-protein coupled receptors, does not activate heterotrimeric G-proteins to transduce the signal. Its function as activator of the Wnt signaling pathway is required for the development of various organs, including liver, kidney, intestine, bone, reproductive tract and eye. May also act as a receptor for norrin (NDP), such results however required additional confirmation in vivo. Required during spermatogenesis to activate the Wnt signaling pathway in peritubular myoid cells. Required for the maintenance of intestinal stem cells and Paneth cell differentiation in postnatal intestinal crypts. Acts as a regulator of bone formation and remodeling. Involved in kidney development; required for maintaining the ureteric bud in an undifferentiated state. Involved in the development of the anterior segment of the eye. Required during erythropoiesis. Also acts as a negative regulator of innate immunity by inhibiting TLR2/TLR4 associated pattern-recognition and pro-inflammatory cytokine production. Plays an important role in regulating the circadian rhythms of plasma lipids, partially through regulating the rhythmic expression of MTTP. Required for proper development of GnRH neurons (gonadotropin-releasing hormone expressing neurons) that control the release of reproductive hormones from the pituitary gland. The polypeptide is Leucine-rich repeat-containing G-protein coupled receptor 4 (LGR4) (Bos taurus (Bovine)).